Here is a 547-residue protein sequence, read N- to C-terminus: CTP synthase (547 aa).

Positions 1–265 are amidoligase domain; it reads MARYVFITGG…DQAVLDAFGI (265 aa). Serine 13 contacts CTP. Serine 13 provides a ligand contact to UTP. ATP is bound by residues 14 to 19 and aspartate 71; that span reads SLGKGL. 2 residues coordinate Mg(2+): aspartate 71 and glutamate 139. Residues 146–148, 186–191, and lysine 222 each bind CTP; these read DIE and KTKPTQ. Residues 186–191 and lysine 222 contribute to the UTP site; that span reads KTKPTQ. A Glutamine amidotransferase type-1 domain is found at 291-546; that stretch reads RVAIVGKYTQ…VRAAVEVSRL (256 aa). L-glutamine is bound at residue glycine 353. Catalysis depends on cysteine 380, which acts as the Nucleophile; for glutamine hydrolysis. Residues 381–384, glutamate 404, and arginine 474 each bind L-glutamine; that span reads LGMQ. Catalysis depends on residues histidine 519 and glutamate 521.

Belongs to the CTP synthase family. Homotetramer.

The enzyme catalyses UTP + L-glutamine + ATP + H2O = CTP + L-glutamate + ADP + phosphate + 2 H(+). It catalyses the reaction L-glutamine + H2O = L-glutamate + NH4(+). The catalysed reaction is UTP + NH4(+) + ATP = CTP + ADP + phosphate + 2 H(+). Its pathway is pyrimidine metabolism; CTP biosynthesis via de novo pathway; CTP from UDP: step 2/2. Its activity is regulated as follows. Allosterically activated by GTP, when glutamine is the substrate; GTP has no effect on the reaction when ammonia is the substrate. The allosteric effector GTP functions by stabilizing the protein conformation that binds the tetrahedral intermediate(s) formed during glutamine hydrolysis. Inhibited by the product CTP, via allosteric rather than competitive inhibition. Functionally, catalyzes the ATP-dependent amination of UTP to CTP with either L-glutamine or ammonia as the source of nitrogen. Regulates intracellular CTP levels through interactions with the four ribonucleotide triphosphates. This chain is CTP synthase, found in Cereibacter sphaeroides (strain ATCC 17023 / DSM 158 / JCM 6121 / CCUG 31486 / LMG 2827 / NBRC 12203 / NCIMB 8253 / ATH 2.4.1.) (Rhodobacter sphaeroides).